We begin with the raw amino-acid sequence, 381 residues long: Alkanesulfonate monooxygenase (381 aa).

It belongs to the SsuD family. In terms of assembly, homotetramer.

It carries out the reaction an alkanesulfonate + FMNH2 + O2 = an aldehyde + FMN + sulfite + H2O + 2 H(+). In terms of biological role, catalyzes the desulfonation of aliphatic sulfonates. The protein is Alkanesulfonate monooxygenase of Enterobacter sp. (strain 638).